We begin with the raw amino-acid sequence, 409 residues long: Tyrosine--tRNA ligase (409 aa).

Y39 lines the L-tyrosine pocket. A 'HIGH' region motif is present at residues 44 to 53 (PTAASLHVGS). Residues Y176 and Q180 each coordinate L-tyrosine. The short motif at 236-240 (KMGKT) is the 'KMSKS' region element. K239 lines the ATP pocket. Positions 346–408 (ISLVDALVGL…GKKAHGVIQA (63 aa)) constitute an S4 RNA-binding domain.

The protein belongs to the class-I aminoacyl-tRNA synthetase family. TyrS type 1 subfamily. In terms of assembly, homodimer.

It localises to the cytoplasm. It carries out the reaction tRNA(Tyr) + L-tyrosine + ATP = L-tyrosyl-tRNA(Tyr) + AMP + diphosphate + H(+). Catalyzes the attachment of tyrosine to tRNA(Tyr) in a two-step reaction: tyrosine is first activated by ATP to form Tyr-AMP and then transferred to the acceptor end of tRNA(Tyr). This chain is Tyrosine--tRNA ligase, found in Zymomonas mobilis subsp. mobilis (strain ATCC 31821 / ZM4 / CP4).